We begin with the raw amino-acid sequence, 119 residues long: Large ribosomal subunit protein bL20 (119 aa).

It belongs to the bacterial ribosomal protein bL20 family.

In terms of biological role, binds directly to 23S ribosomal RNA and is necessary for the in vitro assembly process of the 50S ribosomal subunit. It is not involved in the protein synthesizing functions of that subunit. The polypeptide is Large ribosomal subunit protein bL20 (Listeria innocua serovar 6a (strain ATCC BAA-680 / CLIP 11262)).